Reading from the N-terminus, the 534-residue chain is Arginine--tRNA ligase (534 aa).

A 'HIGH' region motif is present at residues 120 to 130 (ANPTGFLHLGH).

It belongs to the class-I aminoacyl-tRNA synthetase family. Monomer.

It localises to the cytoplasm. It carries out the reaction tRNA(Arg) + L-arginine + ATP = L-arginyl-tRNA(Arg) + AMP + diphosphate. In Mesomycoplasma hyopneumoniae (strain J / ATCC 25934 / NCTC 10110) (Mycoplasma hyopneumoniae), this protein is Arginine--tRNA ligase.